A 371-amino-acid polypeptide reads, in one-letter code: DNA repair protein RAD14 (371 aa).

Positions 26–48 (LSSDQLNRIESRNEPLKTRPLAV) are disordered. Residues 32–42 (NRIESRNEPLK) show a composition bias toward basic and acidic residues. Residues cysteine 191, cysteine 194, cysteine 213, and cysteine 216 each coordinate Zn(2+). A zinc finger spans residues 191–216 (CIECHINIEMDPVLHDVFKLQVCKQC).

The protein belongs to the XPA family. Two monomers bind to kinked/damaged DNA (construct with only the C-terminal DNA-binding domain). Component of the nucleotide excision repair factor 1 (NEF1) complex consisting of RAD1, RAD10 and RAD14.

The protein localises to the nucleus. Its function is as follows. Involved in nucleotide excision repair. Binds specifically to damaged DNA. Required for the incision step. This Saccharomyces cerevisiae (strain ATCC 204508 / S288c) (Baker's yeast) protein is DNA repair protein RAD14 (RAD14).